A 369-amino-acid chain; its full sequence is Chorismate synthase (369 aa).

2 residues coordinate NADP(+): Arg48 and Arg54. Residues 125–127, 238–239, Gly278, 293–297, and Arg319 contribute to the FMN site; these read RSS, NA, and KPTSS.

This sequence belongs to the chorismate synthase family. As to quaternary structure, homotetramer. FMNH2 is required as a cofactor.

It carries out the reaction 5-O-(1-carboxyvinyl)-3-phosphoshikimate = chorismate + phosphate. Its pathway is metabolic intermediate biosynthesis; chorismate biosynthesis; chorismate from D-erythrose 4-phosphate and phosphoenolpyruvate: step 7/7. In terms of biological role, catalyzes the anti-1,4-elimination of the C-3 phosphate and the C-6 proR hydrogen from 5-enolpyruvylshikimate-3-phosphate (EPSP) to yield chorismate, which is the branch point compound that serves as the starting substrate for the three terminal pathways of aromatic amino acid biosynthesis. This reaction introduces a second double bond into the aromatic ring system. This chain is Chorismate synthase, found in Burkholderia mallei (strain ATCC 23344).